A 298-amino-acid polypeptide reads, in one-letter code: Vacuolar protein sorting-associated protein 26 (298 aa).

This sequence belongs to the VPS26 family. As to quaternary structure, component of the retromer complex which consists of vps29, vps6, vps35, vps5 and vps17. Component of a retromer subcomplex consisting of vps29, vps26 and vps35.

Plays a role in vesicular protein sorting. Required for the endosome-to-Golgi retrieval of the vacuolar protein sorting receptor pep1/vps10. Component of the membrane-associated retromer complex which is essential in endosome-to-Golgi retrograde transport. The vps29-vps26-vps35 subcomplex may be involved in cargo selection. The chain is Vacuolar protein sorting-associated protein 26 (vps26) from Schizosaccharomyces pombe (strain 972 / ATCC 24843) (Fission yeast).